A 551-amino-acid chain; its full sequence is Hydroxymethylpyrimidine/phosphomethylpyrimidine kinase THI20 (551 aa).

Glutamine 64 provides a ligand contact to 4-amino-5-hydroxymethyl-2-methylpyrimidine. Residue cysteine 468 is the Nucleophile of the active site. The Proton donor role is filled by glutamate 540.

The protein in the N-terminal section; belongs to the ThiD family. This sequence in the C-terminal section; belongs to the thiaminase-2 family.

It catalyses the reaction 4-amino-5-hydroxymethyl-2-methylpyrimidine + ATP = 4-amino-2-methyl-5-(phosphooxymethyl)pyrimidine + ADP + H(+). It carries out the reaction 4-amino-2-methyl-5-(phosphooxymethyl)pyrimidine + ATP = 4-amino-2-methyl-5-(diphosphooxymethyl)pyrimidine + ADP. The enzyme catalyses thiamine + H2O = 5-(2-hydroxyethyl)-4-methylthiazole + 4-amino-5-hydroxymethyl-2-methylpyrimidine + H(+). It functions in the pathway cofactor biosynthesis; thiamine diphosphate biosynthesis; 4-amino-2-methyl-5-diphosphomethylpyrimidine from 5-amino-1-(5-phospho-D-ribosyl)imidazole: step 2/3. Its pathway is cofactor biosynthesis; thiamine diphosphate biosynthesis; 4-amino-2-methyl-5-diphosphomethylpyrimidine from 5-amino-1-(5-phospho-D-ribosyl)imidazole: step 3/3. Functionally, trifunctional protein with both thiamine biosynthetic and degradative activity. Within the thiamine biosynthesis pathway, catalyzes the phosphorylation of hydroxymethylpyrimidine (HMP) to hydroxymethylpyrimidine phosphate (HMP-P), as well as of HMP-P to HMP-PP. Also has thiaminase II activity and degrades thiamine using water as the nucleophile, resulting only in the formation of HMP (4-amino-2-methyl-5-hydroxymethylpyrimidine) and Thz (4-methyl-5-thiazole ethanol). The polypeptide is Hydroxymethylpyrimidine/phosphomethylpyrimidine kinase THI20 (Saccharomyces cerevisiae (strain ATCC 204508 / S288c) (Baker's yeast)).